We begin with the raw amino-acid sequence, 475 residues long: Methylenetetrahydrofolate--tRNA-(uracil-5-)-methyltransferase TrmFO (475 aa).

9-14 (GGGLAG) provides a ligand contact to FAD. A disordered region spans residues 427-447 (APRNETGRRLRGPEKAALKKR).

It belongs to the MnmG family. TrmFO subfamily. Requires FAD as cofactor.

It is found in the cytoplasm. The catalysed reaction is uridine(54) in tRNA + (6R)-5,10-methylene-5,6,7,8-tetrahydrofolate + NADH + H(+) = 5-methyluridine(54) in tRNA + (6S)-5,6,7,8-tetrahydrofolate + NAD(+). It carries out the reaction uridine(54) in tRNA + (6R)-5,10-methylene-5,6,7,8-tetrahydrofolate + NADPH + H(+) = 5-methyluridine(54) in tRNA + (6S)-5,6,7,8-tetrahydrofolate + NADP(+). Catalyzes the folate-dependent formation of 5-methyl-uridine at position 54 (M-5-U54) in all tRNAs. This is Methylenetetrahydrofolate--tRNA-(uracil-5-)-methyltransferase TrmFO from Methylobacterium radiotolerans (strain ATCC 27329 / DSM 1819 / JCM 2831 / NBRC 15690 / NCIMB 10815 / 0-1).